A 146-amino-acid chain; its full sequence is VEWTDKERSIISDIFSHMDYDDIGPKALSRCLVVYPWTQRYFSGFGNLYNAEGIMSNANVAAHGIKVLHGLDRGMKNMDNIADAYTDLSTLHSEKLHVDPDNFKLLSDCITIVLAAKMGHAFTAETQGAFQKFLAAVVSALGKQYH.

Positions 2–146 (EWTDKERSII…VVSALGKQYH (145 aa)) constitute a Globin domain. Residues His-63 and His-92 each coordinate heme b.

This sequence belongs to the globin family. In terms of assembly, hb1 is a heterotetramer of two alpha-1 chains and two beta chains. Hb2 is a heterotetramer of two alpha-2 chains and two beta chains. As to expression, red blood cells.

In terms of biological role, involved in oxygen transport from gills to the various peripheral tissues. The protein is Hemoglobin subunit beta-1/2 of Trematomus newnesi (Dusky notothen).